We begin with the raw amino-acid sequence, 496 residues long: Signal recognition particle subunit SRP54 1 (496 aa).

Positions 1–296 (MVLAQLGGSI…DVKPFVSRLL (296 aa)) are G-domain. Residues 108–115 (GLQGSGKT), 191–195 (DTSGR), and 249–252 (TKMD) contribute to the GTP site. Residues 297–496 (GMGDLSGLVN…MGMFGGGGGE (200 aa)) form an M-domain region.

This sequence belongs to the GTP-binding SRP family. SRP54 subfamily. In terms of assembly, component of a signal recognition particle (SRP) complex that consists of a 7SL RNA molecule of 300 nucleotides and six protein subunits: SRP72, SRP68, SRP54, SRP19, SRP14 and SRP9.

It is found in the cytoplasm. The protein localises to the endoplasmic reticulum. The catalysed reaction is GTP + H2O = GDP + phosphate + H(+). Functionally, component of the signal recognition particle (SRP) complex, a ribonucleoprotein complex that mediates the cotranslational targeting of secretory and membrane proteins to the endoplasmic reticulum (ER). As part of the SRP complex, associates with the SRP receptor (SR) component SRPRA to target secretory proteins to the endoplasmic reticulum membrane. Binds to the signal sequence of presecretory proteins when they emerge from the ribosomes. Displays basal GTPase activity, and stimulates reciprocal GTPase activation of the SR subunit SRPRA. Forms a guanosine 5'-triphosphate (GTP)-dependent complex with the SR subunit SRPRA. SR compaction and GTPase mediated rearrangement of SR drive SRP-mediated cotranslational protein translocation into the ER. Requires the presence of SRP9/SRP14 and/or SRP19 to stably interact with RNA. The polypeptide is Signal recognition particle subunit SRP54 1 (Solanum lycopersicum (Tomato)).